The primary structure comprises 184 residues: Putative pre-16S rRNA nuclease (184 aa).

Residues 1 to 23 (MFSSQHRLLYQPSGPDLSKNLDP) form a disordered region.

Belongs to the YqgF nuclease family.

It localises to the cytoplasm. Could be a nuclease involved in processing of the 5'-end of pre-16S rRNA. The protein is Putative pre-16S rRNA nuclease of Mycobacterium leprae (strain Br4923).